The chain runs to 262 residues: Small ribosomal subunit protein uS2 (262 aa).

This sequence belongs to the universal ribosomal protein uS2 family.

The chain is Small ribosomal subunit protein uS2 from Borreliella burgdorferi (strain ZS7) (Borrelia burgdorferi).